Reading from the N-terminus, the 806-residue chain is Lon protease (806 aa).

A Lon N-terminal domain is found at 14 to 207; it reads YPVLPLRDIV…KALGFMEGEI (194 aa). 359-366 provides a ligand contact to ATP; it reads GPPGVGKT. A Lon proteolytic domain is found at 594 to 775; that stretch reads DDQVGVVTGL…GEVIAHALLR (182 aa). Catalysis depends on residues Ser681 and Lys724. A disordered region spans residues 786 to 806; that stretch reads SQPAALPSVDSQDEAGTSIAH.

The protein belongs to the peptidase S16 family. As to quaternary structure, homohexamer. Organized in a ring with a central cavity.

It is found in the cytoplasm. It carries out the reaction Hydrolysis of proteins in presence of ATP.. In terms of biological role, ATP-dependent serine protease that mediates the selective degradation of mutant and abnormal proteins as well as certain short-lived regulatory proteins. Required for cellular homeostasis and for survival from DNA damage and developmental changes induced by stress. Degrades polypeptides processively to yield small peptide fragments that are 5 to 10 amino acids long. Binds to DNA in a double-stranded, site-specific manner. In R.meliloti it is important for controlling the turnover of a constitutively expressed protein(s) that, when unregulated, disrupts normal nodule formation and normal growth. The chain is Lon protease from Rhizobium meliloti (strain 1021) (Ensifer meliloti).